A 253-amino-acid polypeptide reads, in one-letter code: Triosephosphate isomerase (253 aa).

Substrate is bound at residue 9 to 11 (NWK). Residue histidine 96 is the Electrophile of the active site. Residue glutamate 168 is the Proton acceptor of the active site. Residues glycine 174, serine 213, and 234 to 235 (GG) contribute to the substrate site.

This sequence belongs to the triosephosphate isomerase family. In terms of assembly, homodimer.

It is found in the cytoplasm. The enzyme catalyses D-glyceraldehyde 3-phosphate = dihydroxyacetone phosphate. It participates in carbohydrate biosynthesis; gluconeogenesis. The protein operates within carbohydrate degradation; glycolysis; D-glyceraldehyde 3-phosphate from glycerone phosphate: step 1/1. Functionally, involved in the gluconeogenesis. Catalyzes stereospecifically the conversion of dihydroxyacetone phosphate (DHAP) to D-glyceraldehyde-3-phosphate (G3P). This is Triosephosphate isomerase from Hydrogenovibrio crunogenus (strain DSM 25203 / XCL-2) (Thiomicrospira crunogena).